We begin with the raw amino-acid sequence, 384 residues long: S-adenosylmethionine synthase (384 aa).

Histidine 15 is an ATP binding site. Aspartate 17 provides a ligand contact to Mg(2+). Glutamate 43 is a binding site for K(+). Positions 56 and 99 each coordinate L-methionine. Positions glutamine 99–arginine 109 are flexible loop. ATP contacts are provided by residues aspartate 164 to lysine 166, arginine 230 to phenylalanine 231, aspartate 239, arginine 245 to lysine 246, alanine 262, and lysine 266. Position 239 (aspartate 239) interacts with L-methionine. Lysine 270 is an L-methionine binding site.

Belongs to the AdoMet synthase family. Homotetramer; dimer of dimers. Mg(2+) serves as cofactor. The cofactor is K(+).

It is found in the cytoplasm. The enzyme catalyses L-methionine + ATP + H2O = S-adenosyl-L-methionine + phosphate + diphosphate. It functions in the pathway amino-acid biosynthesis; S-adenosyl-L-methionine biosynthesis; S-adenosyl-L-methionine from L-methionine: step 1/1. In terms of biological role, catalyzes the formation of S-adenosylmethionine (AdoMet) from methionine and ATP. The overall synthetic reaction is composed of two sequential steps, AdoMet formation and the subsequent tripolyphosphate hydrolysis which occurs prior to release of AdoMet from the enzyme. The sequence is that of S-adenosylmethionine synthase from Enterobacter sp. (strain 638).